The sequence spans 340 residues: Protein RecA (340 aa).

ATP is bound at residue 67-74; that stretch reads GNESSGKT.

This sequence belongs to the RecA family.

Its subcellular location is the cytoplasm. Its function is as follows. Can catalyze the hydrolysis of ATP in the presence of single-stranded DNA, the ATP-dependent uptake of single-stranded DNA by duplex DNA, and the ATP-dependent hybridization of homologous single-stranded DNAs. It interacts with LexA causing its activation and leading to its autocatalytic cleavage. This chain is Protein RecA, found in Mycoplasma genitalium (strain ATCC 33530 / DSM 19775 / NCTC 10195 / G37) (Mycoplasmoides genitalium).